Here is a 1141-residue protein sequence, read N- to C-terminus: MPEAKPAAKKAPKGKDAPKGAPKEAPPKEAPAEAPKEAPPEDQSPTAEEPTGVFLKKPDSVSVETGKDAVVVAKVNGKELPDKPTIKWFKGKWLELGSKSGARFSFKESHNSASNVYTVELHIGKVVLGDRGYYRLEVKAKDTCDSCGFNIDVEAPRQDASGQSLESFKRTSEKKSDTAGELDFSGLLKKREVVEEEKKKKKKDDDDLGIPPEIWELLKGAKKSEYEKIAFQYGITDLRGMLKRLKKAKVEVKKSAAFTKKLDPAYQVDRGNKIKLMVEISDPDLTLKWFKNGQEIKPSSKYVFENVGKKRILTINKCTLADDAAYEVAVKDEKCFTELFVKEPPVLIVTPLEDQQVFVGDRVEMAVEVSEEGAQVMWMKDGVELTREDSFKARYRFKKDGKRHILIFSDVVQEDRGRYQVITNGGQCEAELIVEEKQLEVLQDIADLTVKASEQAVFKCEVSDEKVTGKWYKNGVEVRPSKRITISHVGRFHKLVIDDVRPEDEGDYTFVPDGYALSLSAKLNFLEIKVEYVPKQEPPKIHLDCSGKTSENAIVVVAGNKLRLDVSITGEPPPVATWLKGDEVFTTTEGRTRIEKRVDCSSFVIESAQREDEGRYTIKVTNPVGEDVASIFLQVVDVPDPPEAVRITSVGEDWAILVWEPPMYDGGKPVTGYLVERKKKGSQRWMKLNFEVFTETTYESTKMIEGILYEMRVFAVNAIGVSQPSMNTKPFMPIAPTSEPLHLIVEDVTDTTTTLKWRPPNRIGAGGIDGYLVEYCLEGSEEWVPANTEPVERCGFTVKNLPTGARILFRVVGVNIAGRSEPATLAQPVTIREIAEPPKIRLPRHLRQTYIRKVGEQLNLVVPFQGKPRPQVVWTKGGAPLDTSRVHVRTSDFDTVFFVRQAARSDSGEYELSVQIENMKDTATIRIRVVEKAGPPINVMVKEVWGTNALVEWQAPKDDGNSEIMGYFVQKADKKTMEWFNVYERNRHTSCTVSDLIVGNEYYFRVYTENICGLSDSPGVSKNTARILKTGITFKPFEYKEHDFRMAPKFLTPLIDRVVVAGYSAALNCAVRGHPKPKVVWMKNKMEIREDPKFLITNYQGVLTLNIRRPSPFDAGTYTCRAVNELGEALAECKLEVRVPQ.

The interval 1–62 is disordered; it reads MPEAKPAAKK…VFLKKPDSVS (62 aa). Over residues 13–39 the composition is skewed to basic and acidic residues; sequence KGKDAPKGAPKEAPPKEAPAEAPKEAP. Ig-like C2-type domains are found at residues 50-153, 255-344, 345-437, 438-538, and 539-638; these read PTGV…NIDV, SAAF…VKEP, PVLI…VEEK, QLEV…KQEP, and PKIH…VVDV. Fibronectin type-III domains lie at 641–737 and 739–834; these read PPEA…IAPT and EPLH…IREI. The region spanning 838-932 is the Ig-like C2-type 6 domain; sequence PKIRLPRHLR…ATIRIRVVEK (95 aa). Residues 935 to 1030 form the Fibronectin type-III 3 domain; sequence PPINVMVKEV…SKNTARILKT (96 aa). An Ig-like C2-type 7 domain is found at 1048 to 1141; it reads PKFLTPLIDR…ECKLEVRVPQ (94 aa).

This sequence belongs to the immunoglobulin superfamily. MyBP family.

Functionally, thick filament-associated protein located in the crossbridge region of vertebrate striated muscle a bands. In vitro it binds MHC, F-actin and native thin filaments, and modifies the activity of actin-activated myosin ATPase. It may modulate muscle contraction or may play a more structural role. This Homo sapiens (Human) protein is Myosin-binding protein C, fast-type (MYBPC2).